We begin with the raw amino-acid sequence, 173 residues long: MDYFTLFGLPVRYPVDGSLLASRYQDLQRQFHPDRFASQPERERLMALQQAATINEAYQTLKHPLKRAEYMLSLHGFDLGNEQHTMRDTAFLMEQLELREELDAIERKADAQTQLASFGARVNETVKQRSALMIQQLDSQQWMDAADTVRKLRFLDKLQQQVEQLEEKLLGFE.

One can recognise a J domain in the interval 2-74 (DYFTLFGLPV…LKRAEYMLSL (73 aa)).

It belongs to the HscB family. Interacts with HscA and stimulates its ATPase activity. Interacts with IscU.

In terms of biological role, co-chaperone involved in the maturation of iron-sulfur cluster-containing proteins. Seems to help targeting proteins to be folded toward HscA. This is Co-chaperone protein HscB from Serratia proteamaculans (strain 568).